Reading from the N-terminus, the 379-residue chain is MTTVDKRPSSRGYGDWRLSDIPQYKDGISTYEFVRATHEADYRTHQAEPVAGRTFGFNGIGRLTEVALHMPTKYTLHDQSSQYKESPSFFQGLMGVPDRGPVDLAAFQRETEELATAFENNGIKVHWVDYPEEPANPYGPLMGHVFLSWGSIWRGGSVISRFGFLPGMVGVSEYLAKWAWNTLNIPPLVAITEGAMEPGACNMIADEVLVTCLSASYDQRGTDQLVAAISKTSGTEEFHNLQLRPAVEGFFNKATGACAHPDININAIDVGKLVVSPAALDWDARTWLYDNNFELIEADPDEQREFLAPCNVLLLEPGKVIAHADCHKTNQKIRDAGVEVIEVTGTEIRKACGGIKCRVMQINREPGPTLADVRNRVWR.

Catalysis depends on Cys357, which acts as the Amidino-cysteine intermediate.

Belongs to the arginine deiminase family.

It catalyses the reaction 2-nitroimidazole + H2O = 1,3-dihydro-2H-imidazol-2-one + nitrite + H(+). Involved in the biodegradation of 2-Nitroimidazole (2NI) which is a natural antibiotic and an analog of the synthetic nitroimidazoles used for treatment of tuberculosis, Chagas disease (also called American Trypanosomiasis) and cancer. Catalyzes the hydrolytic denitration of 2NI to produce imidazol-2-one and nitrite. It is also active against the 2NI synthetic derivative benznidazole. NnhA confers drug resistance to 2NI. The chain is 2-nitroimidazole nitrohydrolase (nnhA) from Mycobacterium sp. (strain JS330).